The sequence spans 300 residues: UDP-N-acetylenolpyruvoylglucosamine reductase (300 aa).

The region spanning 27–216 (RVGGPADVIF…TERREKTQPI (190 aa)) is the FAD-binding PCMH-type domain. Arginine 172 is an active-site residue. Catalysis depends on serine 223, which acts as the Proton donor. Residue glutamate 293 is part of the active site.

The protein belongs to the MurB family. FAD serves as cofactor.

The protein localises to the cytoplasm. The enzyme catalyses UDP-N-acetyl-alpha-D-muramate + NADP(+) = UDP-N-acetyl-3-O-(1-carboxyvinyl)-alpha-D-glucosamine + NADPH + H(+). The protein operates within cell wall biogenesis; peptidoglycan biosynthesis. Cell wall formation. The sequence is that of UDP-N-acetylenolpyruvoylglucosamine reductase from Phenylobacterium zucineum (strain HLK1).